A 234-amino-acid polypeptide reads, in one-letter code: Sugar fermentation stimulation protein homolog (234 aa).

Belongs to the SfsA family.

The sequence is that of Sugar fermentation stimulation protein homolog from Photobacterium profundum (strain SS9).